The following is a 189-amino-acid chain: Capsid protein (189 aa).

This sequence belongs to the tymoviruses capsid protein family.

It localises to the virion. Functionally, self-assembles to form a T=3 icosahedral capsid composed of 180 copies of the capsid protein. The capsid encapsulates the single-stranded RNA genome. A pentameric unit may be lost during decapsidation. The sequence is that of Capsid protein from Brassica.